Consider the following 473-residue polypeptide: Putative amidase AmiC (473 aa).

Residues lysine 82 and serine 157 each act as charge relay system in the active site. The Acyl-ester intermediate role is filled by serine 181.

It belongs to the amidase family.

The catalysed reaction is a monocarboxylic acid amide + H2O = a monocarboxylate + NH4(+). The chain is Putative amidase AmiC (amiC) from Mycobacterium bovis (strain ATCC BAA-935 / AF2122/97).